Reading from the N-terminus, the 252-residue chain is Thiazole synthase (252 aa).

Lys98 acts as the Schiff-base intermediate with DXP in catalysis. Residues Gly159, 185-186 (AG), and 207-208 (AT) each bind 1-deoxy-D-xylulose 5-phosphate.

This sequence belongs to the ThiG family. Homotetramer. Forms heterodimers with either ThiH or ThiS.

It is found in the cytoplasm. The catalysed reaction is [ThiS sulfur-carrier protein]-C-terminal-Gly-aminoethanethioate + 2-iminoacetate + 1-deoxy-D-xylulose 5-phosphate = [ThiS sulfur-carrier protein]-C-terminal Gly-Gly + 2-[(2R,5Z)-2-carboxy-4-methylthiazol-5(2H)-ylidene]ethyl phosphate + 2 H2O + H(+). Its pathway is cofactor biosynthesis; thiamine diphosphate biosynthesis. Functionally, catalyzes the rearrangement of 1-deoxy-D-xylulose 5-phosphate (DXP) to produce the thiazole phosphate moiety of thiamine. Sulfur is provided by the thiocarboxylate moiety of the carrier protein ThiS. In vitro, sulfur can be provided by H(2)S. This Mycobacterium avium (strain 104) protein is Thiazole synthase.